A 317-amino-acid chain; its full sequence is RHOMBOID-like protein 2 (317 aa).

Helical transmembrane passes span 33-53 (SWLIPAIVVANLAVFIAVMFV), 118-138 (WLHAGIIHLLTNMLSLIFIGI), 149-169 (VGLIYLISGLGGSILSSLFLQ), 172-192 (ISVGASGALFGLLGAMLSELL), 202-222 (AAALITLLFIIAINLALGMLP), 224-244 (VDNFAHIGGFLTGFCLGFVLL), and 272-292 (LFVVSVVLLVVGLTVALVMLF). S177 functions as the Nucleophile in the catalytic mechanism. The active-site Charge relay system is H229.

Belongs to the peptidase S54 family. In terms of tissue distribution, expressed in roots, seedlings, leaves, stems and flowers.

The protein resides in the golgi apparatus membrane. It catalyses the reaction Cleaves type-1 transmembrane domains using a catalytic dyad composed of serine and histidine that are contributed by different transmembrane domains.. Rhomboid-type serine protease that catalyzes intramembrane proteolysis. Can cleave the Drosophila proteins Spitz and Keren. May function in pollen elongation. The polypeptide is RHOMBOID-like protein 2 (Arabidopsis thaliana (Mouse-ear cress)).